We begin with the raw amino-acid sequence, 257 residues long: Imidazole glycerol phosphate synthase subunit HisF (257 aa).

Catalysis depends on residues Asp11 and Asp130.

The protein belongs to the HisA/HisF family. In terms of assembly, heterodimer of HisH and HisF.

The protein resides in the cytoplasm. It catalyses the reaction 5-[(5-phospho-1-deoxy-D-ribulos-1-ylimino)methylamino]-1-(5-phospho-beta-D-ribosyl)imidazole-4-carboxamide + L-glutamine = D-erythro-1-(imidazol-4-yl)glycerol 3-phosphate + 5-amino-1-(5-phospho-beta-D-ribosyl)imidazole-4-carboxamide + L-glutamate + H(+). Its pathway is amino-acid biosynthesis; L-histidine biosynthesis; L-histidine from 5-phospho-alpha-D-ribose 1-diphosphate: step 5/9. In terms of biological role, IGPS catalyzes the conversion of PRFAR and glutamine to IGP, AICAR and glutamate. The HisF subunit catalyzes the cyclization activity that produces IGP and AICAR from PRFAR using the ammonia provided by the HisH subunit. This chain is Imidazole glycerol phosphate synthase subunit HisF, found in Shewanella denitrificans (strain OS217 / ATCC BAA-1090 / DSM 15013).